A 975-amino-acid chain; its full sequence is Translation initiation factor IF-2 (975 aa).

2 disordered regions span residues 49–110 and 193–339; these read KLSG…APKA and AAAP…GRGA. The segment covering 63 to 72 has biased composition (basic residues); that stretch reads KKTAARKAAP. Low complexity-rich tracts occupy residues 73 to 94, 193 to 202, and 209 to 225; these read KKAAVAAPVPEADASSAAAKTP, AAAPEAPAPQ, and VVGTSGVSSSATPASAP. Positions 308-318 are enriched in basic and acidic residues; the sequence is GADRGGRDFDK. Low complexity predominate over residues 324–336; sequence GPSAPAAGPAAAG. One can recognise a tr-type G domain in the interval 469-639; the sequence is TRPPVVTVMG…KLVAEVAELK (171 aa). A G1 region spans residues 478 to 485; the sequence is GHVDHGKT. A GTP-binding site is contributed by 478–485; sequence GHVDHGKT. The tract at residues 503-507 is G2; that stretch reads GITQH. Residues 525 to 528 are G3; it reads DTPG. Residues 525–529 and 579–582 contribute to the GTP site; these read DTPGH and NKID. Residues 579–582 form a G4 region; sequence NKID. Positions 615–617 are G5; the sequence is SAL.

It belongs to the TRAFAC class translation factor GTPase superfamily. Classic translation factor GTPase family. IF-2 subfamily.

The protein resides in the cytoplasm. In terms of biological role, one of the essential components for the initiation of protein synthesis. Protects formylmethionyl-tRNA from spontaneous hydrolysis and promotes its binding to the 30S ribosomal subunits. Also involved in the hydrolysis of GTP during the formation of the 70S ribosomal complex. The sequence is that of Translation initiation factor IF-2 from Bdellovibrio bacteriovorus (strain ATCC 15356 / DSM 50701 / NCIMB 9529 / HD100).